The following is a 198-amino-acid chain: CASP-like protein 4B3 (198 aa).

The segment at 1-27 (MSSSGPPAGDGRDDASGPGPAGAAAAA) is disordered. At 1–51 (MSSSGPPAGDGRDDASGPGPAGAAAAADGSVPVSRSIVERWKMEPAAARAR) the chain is on the cytoplasmic side. Residues 16 to 27 (SGPGPAGAAAAA) show a composition bias toward low complexity. Residues 52–72 (LLLRAVAWLFSLLALVVMASN) traverse the membrane as a helical segment. Residues 73-85 (KHGHGGAQDFDNY) lie on the Extracellular side of the membrane. Residues 86 to 106 (PEYTYCLGISIIAVLYTTAQV) form a helical membrane-spanning segment. At 107–124 (TRDVHRLSWGRDVIAGRK) the chain is on the cytoplasmic side. A helical transmembrane segment spans residues 125-145 (AAAVVDFAGDQVVAYLLMSAL). At 146–166 (SAAAPVTDYMRQAADNLFTDS) the chain is on the extracellular side. A helical transmembrane segment spans residues 167–187 (AAAAISMAFLAFLAAGLSALV). The Cytoplasmic portion of the chain corresponds to 188–198 (SGYNLAMEVLV).

It belongs to the Casparian strip membrane proteins (CASP) family. Homodimer and heterodimers.

It localises to the cell membrane. The polypeptide is CASP-like protein 4B3 (Oryza sativa subsp. japonica (Rice)).